We begin with the raw amino-acid sequence, 102 residues long: Protein YcgL (102 aa).

One can recognise a YcgL domain in the interval Met-14 to Leu-98.

The polypeptide is Protein YcgL (Salmonella agona (strain SL483)).